Consider the following 588-residue polypeptide: Actin-histidine N-methyltransferase (588 aa).

Residues 1 to 25 (MGKKSRVKTQKSGTGATASVSPKET) are disordered. A compositionally biased stretch (polar residues) spans 10 to 25 (QKSGTGATASVSPKET). Residues Arg75, 104 to 106 (EGF), Arg254, 275 to 279 (DMCNH), and 325 to 327 (SGF) contribute to the S-adenosyl-L-methionine site. The 221-residue stretch at 94 to 314 (EGFEMVNFKE…AGEQIYIFYG (221 aa)) folds into the SET domain. A disordered region spans residues 546-588 (VNGENSIPNGTRSGKENFNQEGSERATEGTKESSSDSTAGARE). Residues 548 to 566 (GENSIPNGTRSGKENFNQE) show a composition bias toward polar residues. Residues 567–579 (GSERATEGTKESS) are compositionally biased toward basic and acidic residues.

This sequence belongs to the class V-like SAM-binding methyltransferase superfamily. SETD3 actin-histidine methyltransferase family. In terms of assembly, interacts with MYOD1. Post-translationally, phosphorylated by GSK3B, which is required for recognition by the SCF(FBXW7) complex and subsequent degradation. In terms of processing, ubiquitinated by the SCF(FBXW7) complex following phosphorylation by GSK3B, leading to its degradation by the proteasome.

The protein localises to the cytoplasm. It is found in the nucleus. The catalysed reaction is L-histidyl-[protein] + S-adenosyl-L-methionine = N(tele)-methyl-L-histidyl-[protein] + S-adenosyl-L-homocysteine + H(+). Protein-histidine N-methyltransferase that specifically mediates 3-methylhistidine (tele-methylhistidine) methylation of actin at 'His-73'. Histidine methylation of actin is required for smooth muscle contraction of the laboring uterus during delivery. Does not have protein-lysine N-methyltransferase activity and probably only catalyzes histidine methylation of actin. This chain is Actin-histidine N-methyltransferase, found in Canis lupus familiaris (Dog).